We begin with the raw amino-acid sequence, 748 residues long: Semaphorin-3B (748 aa).

The N-terminal stretch at 1–25 (MGRAEAAAMIPGLALLWVAGLGDTA) is a signal peptide. A Sema domain is found at 30 to 512 (RLRLSFQELQ…SRSAVAQIAL (483 aa)). An N-linked (GlcNAc...) asparagine glycan is attached at N82. A disulfide bridge links C102 with C113. A glycan (N-linked (GlcNAc...) asparagine) is linked at N124. 5 disulfide bridges follow: C131–C140, C268–C379, C292–C339, C515–C533, and C643–C709. In terms of domain architecture, Ig-like C2-type spans 561–659 (PSTLCSGDSS…FSQPLRRLVL (99 aa)). The segment at 708–748 (MCRPQPGHHSVAADSRRKGRNRRMHVSELRAERGPRSAAHW) is disordered. A compositionally biased stretch (basic and acidic residues) spans 732–742 (HVSELRAERGP).

It belongs to the semaphorin family.

It is found in the secreted. Its function is as follows. Inhibits axonal extension by providing local signals to specify territories inaccessible for growing axons. This chain is Semaphorin-3B (Sema3b), found in Mus musculus (Mouse).